The primary structure comprises 409 residues: Endoglucanase B (409 aa).

A signal peptide spans Met1 to Ala21. A disordered region spans residues Cys23–Met66. The segment covering Lys27–Ser38 has biased composition (basic and acidic residues). Polar residues predominate over residues Val57–Met66. The active-site Proton donor is Glu212. The active-site Nucleophile is Glu332.

This sequence belongs to the glycosyl hydrolase 5 (cellulase A) family.

The enzyme catalyses Endohydrolysis of (1-&gt;4)-beta-D-glucosidic linkages in cellulose, lichenin and cereal beta-D-glucans.. This is Endoglucanase B (celB) from Ruminococcus albus.